A 299-amino-acid polypeptide reads, in one-letter code: Probable lipid kinase YegS (299 aa).

The DAGKc domain maps to 2 to 133; the sequence is AEFPASLLIL…IDMAQVNKQT (132 aa). ATP contacts are provided by residues Thr40, 66–72, and Thr95; that span reads GDGTINE. Mg(2+)-binding residues include Leu215, Asp218, and Leu220. The active-site Proton acceptor is Glu271.

This sequence belongs to the diacylglycerol/lipid kinase family. YegS lipid kinase subfamily. The cofactor is Mg(2+). Requires Ca(2+) as cofactor.

Its subcellular location is the cytoplasm. Probably phosphorylates lipids; the in vivo substrate is unknown. This chain is Probable lipid kinase YegS, found in Escherichia coli (strain 55989 / EAEC).